The sequence spans 291 residues: Ribosome maturation factor RimP (291 aa).

Positions glutamate 188–histidine 291 are disordered. Positions glutamate 193–aspartate 211 are enriched in acidic residues. Basic and acidic residues-rich tracts occupy residues glutamate 212 to alanine 237 and alanine 245 to glutamine 254.

Belongs to the RimP family.

The protein resides in the cytoplasm. Its function is as follows. Required for maturation of 30S ribosomal subunits. The polypeptide is Ribosome maturation factor RimP (Azorhizobium caulinodans (strain ATCC 43989 / DSM 5975 / JCM 20966 / LMG 6465 / NBRC 14845 / NCIMB 13405 / ORS 571)).